Reading from the N-terminus, the 32-residue chain is ilv operon leader peptide (32 aa).

In terms of biological role, this protein is involved in control of the biosynthesis of isoleucine, leucine, and valine. In Escherichia coli (strain K12), this protein is ilv operon leader peptide (ivbL).